The sequence spans 306 residues: Aspartate carbamoyltransferase catalytic subunit (306 aa).

2 residues coordinate carbamoyl phosphate: R56 and T57. K84 serves as a coordination point for L-aspartate. 3 residues coordinate carbamoyl phosphate: R106, H136, and Q139. Positions 169 and 221 each coordinate L-aspartate. Carbamoyl phosphate-binding residues include A262 and P263.

Belongs to the aspartate/ornithine carbamoyltransferase superfamily. ATCase family. As to quaternary structure, heterododecamer (2C3:3R2) of six catalytic PyrB chains organized as two trimers (C3), and six regulatory PyrI chains organized as three dimers (R2).

The catalysed reaction is carbamoyl phosphate + L-aspartate = N-carbamoyl-L-aspartate + phosphate + H(+). It participates in pyrimidine metabolism; UMP biosynthesis via de novo pathway; (S)-dihydroorotate from bicarbonate: step 2/3. Catalyzes the condensation of carbamoyl phosphate and aspartate to form carbamoyl aspartate and inorganic phosphate, the committed step in the de novo pyrimidine nucleotide biosynthesis pathway. The chain is Aspartate carbamoyltransferase catalytic subunit from Streptococcus gordonii (strain Challis / ATCC 35105 / BCRC 15272 / CH1 / DL1 / V288).